A 517-amino-acid polypeptide reads, in one-letter code: MTTNIHAQRILILDFGSQYTQLVARRIREIGVYCELWSWDVEESDIRDFNPDGIILSGGPESVTEANSPRAPQYVFDSGVPVFGVCYGMQTMAEQLGGKVATSTEREFGYAAVQVTGESALFKDLEATQDVWMSHGDKVVEIPSDFVKIAETETCPYAAMANEEKKYYGVQFHPEVTHTKNGLKMLENFVLNVCGCEGLWTSASIIEDAIARIKEQVGDDEVILGLSGGVDSSVVAMLAHRAIGDKLTCVFVDNGLLRLNEAEQVMEMFSEGFGLKIIHVEAEERFLSALSGESDPEAKRKIIGHVFVDIFDEESKKLSNAKWLAQGTIYPDVIESAASKTGKAHVIKSHHNVGGLPDDMEMGLVEPLRELFKDEVRKIGLELGLPYNMLYRHPFPGPGLGVRVLGEVKKEYCDLLRRADAIFIEELHNADLYNKVSQAFTVFLPVRSVGVMGDGRKYDWVVSLRAVETIDFMTAHWAHLPYDFLGKVSNRIINEVGGISRVVYDISGKPPATIEWE.

In terms of domain architecture, Glutamine amidotransferase type-1 spans 9–199; that stretch reads RILILDFGSQ…VLNVCGCEGL (191 aa). The active-site Nucleophile is cysteine 86. Residues histidine 173 and glutamate 175 contribute to the active site. The GMPS ATP-PPase domain maps to 200–392; it reads WTSASIIEDA…LGLPYNMLYR (193 aa). ATP is bound at residue 227 to 233; that stretch reads SGGVDSS.

In terms of assembly, homodimer.

It catalyses the reaction XMP + L-glutamine + ATP + H2O = GMP + L-glutamate + AMP + diphosphate + 2 H(+). It functions in the pathway purine metabolism; GMP biosynthesis; GMP from XMP (L-Gln route): step 1/1. Catalyzes the synthesis of GMP from XMP. This Aliivibrio salmonicida (strain LFI1238) (Vibrio salmonicida (strain LFI1238)) protein is GMP synthase [glutamine-hydrolyzing].